Consider the following 525-residue polypeptide: BTB/POZ domain-containing protein 2 (525 aa).

A disordered region spans residues 1 to 86 (MAAGGSGGRA…AEEAAGPGAA (86 aa)). Positions 16 to 26 (VGVGPGTGGSP) are enriched in gly residues. Positions 27–55 (GPSANAAATPAPGNAAAAAAAAAAAAAAP) are enriched in low complexity. The span at 56–65 (GPTPPAPPGP) shows a compositional bias: pro residues. Residues 66–86 (GTDAQAAGAERAEEAAGPGAA) show a composition bias toward low complexity. The 71-residue stretch at 117–187 (CDVHFLVGKG…LYSDEVQIGP (71 aa)) folds into the BTB domain.

As to quaternary structure, interacts with topoisomerase 1 and with TRIM5 isoform Delta.

It localises to the cytoplasm. The protein is BTB/POZ domain-containing protein 2 (BTBD2) of Homo sapiens (Human).